The chain runs to 198 residues: Holliday junction resolvase RecU (198 aa).

Residues 1–21 (MVNYPHKLSSQKRQPSLSQPK) form a disordered region. Residues 11 to 21 (QKRQPSLSQPK) show a composition bias toward polar residues. Thr81, Asp83, Glu96, and Gln115 together coordinate Mg(2+).

It belongs to the RecU family. Requires Mg(2+) as cofactor.

It is found in the cytoplasm. It carries out the reaction Endonucleolytic cleavage at a junction such as a reciprocal single-stranded crossover between two homologous DNA duplexes (Holliday junction).. In terms of biological role, endonuclease that resolves Holliday junction intermediates in genetic recombination. Cleaves mobile four-strand junctions by introducing symmetrical nicks in paired strands. Promotes annealing of linear ssDNA with homologous dsDNA. Required for DNA repair, homologous recombination and chromosome segregation. This Streptococcus pneumoniae (strain Taiwan19F-14) protein is Holliday junction resolvase RecU.